Consider the following 1098-residue polypeptide: Sister-chromatid cohesion protein 3 (1098 aa).

The segment at 1 to 68 (MEDSPQGLKR…RSRTHPPQQN (68 aa)) is disordered. Positions 245-265 (RVDSLNKRLSVTHEQITTLED) form a coiled coil. The 86-residue stretch at 275–360 (FVHRYRDIDN…QRFSNRMIEM (86 aa)) folds into the SCD domain. 3 coiled-coil regions span residues 632–653 (KLKD…EVKD), 888–908 (LESL…GREE), and 1009–1032 (LETL…ANVR). Residues 1027–1077 (EAANVRRRGRPRKRPETERKRLFDEQSGSDEDESISGGSDREDKLDEDAPL) are disordered. Over residues 1040 to 1050 (RPETERKRLFD) the composition is skewed to basic and acidic residues.

The protein belongs to the SCC3 family. Part of the cohesin complex. Interacts with DEK3. In terms of tissue distribution, expressed in roots, mature leaves, buds and seedlings.

The protein localises to the nucleus. Its subcellular location is the chromosome. In terms of biological role, essential component of cohesin complex, a complex required for the cohesion of sister chromatids after DNA replication. The cohesin complex apparently forms a large proteinaceous ring within which sister chromatids can be trapped. At anaphase, the complex is cleaved and dissociates from chromatin, allowing sister chromatids to segregate. The cohesin complex may also play a role in spindle pole assembly during mitosis. Required for centromere cohesion maintenance at anaphase I and for the monopolar orientation of the kinetochores during both male and female meiosis. Also involved in mitosis. The chain is Sister-chromatid cohesion protein 3 from Arabidopsis thaliana (Mouse-ear cress).